Here is a 301-residue protein sequence, read N- to C-terminus: GTPase Era (301 aa).

Residues 7–175 (YCGFIAIVGR…AAIVRKHLPE (169 aa)) enclose the Era-type G domain. Positions 15–22 (GRPNVGKS) are G1. 15–22 (GRPNVGKS) is a GTP binding site. Positions 41–45 (QTTRH) are G2. The segment at 62-65 (DTPG) is G3. GTP-binding positions include 62-66 (DTPGL) and 124-127 (NKVD). Residues 124–127 (NKVD) form a G4 region. Residues 154–156 (ISA) form a G5 region. In terms of domain architecture, KH type-2 spans 206-283 (LGAELPYSVT…HLELWVKVKS (78 aa)).

The protein belongs to the TRAFAC class TrmE-Era-EngA-EngB-Septin-like GTPase superfamily. Era GTPase family. As to quaternary structure, monomer.

Its subcellular location is the cytoplasm. It is found in the cell inner membrane. Its function is as follows. An essential GTPase that binds both GDP and GTP, with rapid nucleotide exchange. Plays a role in 16S rRNA processing and 30S ribosomal subunit biogenesis and possibly also in cell cycle regulation and energy metabolism. The polypeptide is GTPase Era (Cronobacter sakazakii (strain ATCC BAA-894) (Enterobacter sakazakii)).